We begin with the raw amino-acid sequence, 327 residues long: Phenylalanine--tRNA ligase alpha subunit (327 aa).

Glu252 is a Mg(2+) binding site.

The protein belongs to the class-II aminoacyl-tRNA synthetase family. Phe-tRNA synthetase alpha subunit type 1 subfamily. As to quaternary structure, tetramer of two alpha and two beta subunits. Mg(2+) serves as cofactor.

The protein resides in the cytoplasm. It catalyses the reaction tRNA(Phe) + L-phenylalanine + ATP = L-phenylalanyl-tRNA(Phe) + AMP + diphosphate + H(+). This is Phenylalanine--tRNA ligase alpha subunit from Salmonella choleraesuis (strain SC-B67).